The chain runs to 349 residues: Phenylalanine--tRNA ligase alpha subunit (349 aa).

Glutamate 258 serves as a coordination point for Mg(2+).

Belongs to the class-II aminoacyl-tRNA synthetase family. Phe-tRNA synthetase alpha subunit type 1 subfamily. As to quaternary structure, tetramer of two alpha and two beta subunits. Mg(2+) is required as a cofactor.

The protein resides in the cytoplasm. The enzyme catalyses tRNA(Phe) + L-phenylalanine + ATP = L-phenylalanyl-tRNA(Phe) + AMP + diphosphate + H(+). The sequence is that of Phenylalanine--tRNA ligase alpha subunit from Rickettsia canadensis (strain McKiel).